Consider the following 290-residue polypeptide: Tegument protein VP22 (290 aa).

Positions 98–112 (STSHGRLSPTKTTPH) are enriched in polar residues. The interval 98-156 (STSHGRLSPTKTTPHPKSAGVTPPQRVPARPATRAAAPSATPTQPDCVAKQRTSPGVNS) is disordered. Residues 118 to 142 (VTPPQRVPARPATRAAAPSATPTQP) show a composition bias toward low complexity. Residues 146 to 149 (AKQR) carry the Nuclear localization signal motif. Positions 219–231 (LDRFLKAAAIRIL) match the Nuclear export signal motif.

The protein belongs to the alphaherpesvirinae VP22 tegument protein family. As to quaternary structure, interacts with gE (via C-terminus); this interaction is necessary for the recruitment of VP22 to the Golgi and its packaging into virions. Interacts with gM (via C-terminus). Interacts with VP16; this interaction allows the formation of a tripartite complex composed of VP16, VP22 and UL41/VHS. Interacts with the capsid-binding protein UL16. Interacts with host CGAS. In terms of processing, highly phosphorylated in the host cell. Packaging is selective for underphosphorylated forms.

The protein resides in the virion tegument. It is found in the host cytoplasm. The protein localises to the host nucleus. Its subcellular location is the host Golgi apparatus. Its function is as follows. Tegument protein that plays different roles during the time course of infection. Participates in both the accumulation of viral mRNAs and viral protein translation at late time of infection. Modulates the RNase activity of the virion host shutoff protein UL41 probably to ensure necessary levels of key cellular mRNAs and proteins. Plays a role in microtubule reorganization that occurs after viral infection by stabilizing microtubule network. Plays a role in the inhibition of host innate immune system by targeting the CGAS enzymatic activity which is the principal cytosolic DNA sensor that detects invading viral DNA. Acts by mediating disruption of liquid-like droplets in which CGAS is activated, thereby preventing CGAS activity. In Equus caballus (Horse), this protein is Tegument protein VP22 (11).